The primary structure comprises 391 residues: Trehalose-phosphate phosphatase (391 aa).

Asp147 acts as the Nucleophile in catalysis. Mg(2+)-binding residues include Asp147, Asp149, and Asp330. A substrate-binding site is contributed by 147–149 (DFD).

This sequence belongs to the trehalose phosphatase family. Mg(2+) serves as cofactor.

The enzyme catalyses alpha,alpha-trehalose 6-phosphate + H2O = alpha,alpha-trehalose + phosphate. The protein operates within glycan biosynthesis; trehalose biosynthesis. In terms of biological role, removes the phosphate from trehalose 6-phosphate to produce free trehalose. This Mycobacterium bovis (strain ATCC BAA-935 / AF2122/97) protein is Trehalose-phosphate phosphatase (otsB).